Consider the following 537-residue polypeptide: MGCVQCKDKEATKLTDERDNSLTQSLGYRYGTDPTPQHYPSFTVTTIPNYNNFHATAGQGLTVFGGVNSSSHTGTLRTRGGTGVTLFVALYDYEARTEDDLSFQKGEKFQILNSSEGDWWEARSLTTGGTGYIPSNYVAPVDSIQAEEWYFGKLGRKDAERQLLSFGNPRGTYLIRESETTKGAYSLSIRDWDDMKGDHVKHYKIRKLDNGGYYITTRAQFETLQQLVQHYSERAAGLCCRLVVPCHKGMPRLTDLSVKTKDVWEIPRESLQLIKRLGNGQFGEVWMGTWNGNTKVAIKTLKPGTMSPESFLEEAQIMKKLKHDKLVQLYAVVSEEPIYIVTEYMSKGSLLDFLKDGEGRALKLPNLVDMAAQVARGMAYIERMNYIHRDLRSANILVGNGLICKIADFGLARLIEDNEYTARQGAKFPIKWTAPEAALYGRFTIKSDVWSFGILLTELVTKGRVPYPGMNNREVLEQVERGYRMPCPQDCPISLHELMLNCWKKDPEERPTFEYLQGFLEDYFTATEPQYQPGDNL.

The N-myristoyl glycine moiety is linked to residue G2. Residues C3 and C6 are each lipidated (S-palmitoyl cysteine). At T12 the chain carries Phosphothreonine; by PKC. The 62-residue stretch at 82 to 143 (TGVTLFVALY…PSNYVAPVDS (62 aa)) folds into the SH3 domain. An SH2 domain is found at 149–246 (WYFGKLGRKD…GLCCRLVVPC (98 aa)). The Protein kinase domain maps to 271–524 (LQLIKRLGNG…YLQGFLEDYF (254 aa)). Residues 277-285 (LGNGQFGEV) and K299 contribute to the ATP site. The active-site Proton acceptor is the D390. Residue Y420 is modified to Phosphotyrosine; by autocatalysis. Phosphotyrosine is present on Y531.

This sequence belongs to the protein kinase superfamily. Tyr protein kinase family. SRC subfamily. In terms of assembly, associates through its SH3 domain, to the p85 subunit of phosphatidylinositol 3-kinase. The cofactor is Mn(2+).

The enzyme catalyses L-tyrosyl-[protein] + ATP = O-phospho-L-tyrosyl-[protein] + ADP + H(+). Its activity is regulated as follows. Inhibited by phosphorylation of Tyr-531 by leukocyte common antigen and activated by dephosphorylation of this site. Its function is as follows. Tyrosine-protein kinase implicated in the control of cell growth. Plays a role in the regulation of intracellular calcium levels. Required in brain development and mature brain function with important roles in the regulation of axon growth, axon guidance, and neurite extension. Blocks axon outgrowth and attraction induced by ntn1 by phosphorylating its receptor ddc. The protein is Tyrosine-protein kinase Fyn (fyn) of Xenopus laevis (African clawed frog).